The chain runs to 92 residues: Putative septation protein SpoVG (92 aa).

This sequence belongs to the SpoVG family.

In terms of biological role, could be involved in septation. The polypeptide is Putative septation protein SpoVG (Clostridium botulinum (strain Eklund 17B / Type B)).